The following is a 203-amino-acid chain: Monothiol glutaredoxin-7 (203 aa).

The first 32 residues, 1-32 (MAIVINKRNVRVLVITNLLLIVVFFVLRNSNA), serve as a signal peptide directing secretion. Positions 88 to 191 (AAEYNKIMEQ…DSFKKWSDGA (104 aa)) constitute a Glutaredoxin domain. Cys108 is a binding site for [2Fe-2S] cluster.

It belongs to the glutaredoxin family. Monothiol subfamily.

This chain is Monothiol glutaredoxin-7 (GRX7), found in Saccharomyces cerevisiae (strain ATCC 204508 / S288c) (Baker's yeast).